The sequence spans 305 residues: HPr kinase/phosphorylase (305 aa).

Active-site residues include histidine 138 and lysine 159. 153–160 lines the ATP pocket; that stretch reads GESGIGKS. Serine 160 lines the Mg(2+) pocket. Aspartate 177 functions as the Proton acceptor; for phosphorylation activity. Proton donor; for dephosphorylation activity in the catalytic mechanism. The tract at residues 201–210 is important for the catalytic mechanism of both phosphorylation and dephosphorylation; the sequence is IEIRGIGILD. Mg(2+) is bound at residue glutamate 202. Residue arginine 243 is part of the active site. An important for the catalytic mechanism of dephosphorylation region spans residues 264–269; the sequence is PVRPGR.

This sequence belongs to the HPrK/P family. In terms of assembly, homohexamer. It depends on Mg(2+) as a cofactor.

It carries out the reaction [HPr protein]-L-serine + ATP = [HPr protein]-O-phospho-L-serine + ADP + H(+). The enzyme catalyses [HPr protein]-O-phospho-L-serine + phosphate + H(+) = [HPr protein]-L-serine + diphosphate. Its function is as follows. Catalyzes the ATP- as well as the pyrophosphate-dependent phosphorylation of a specific serine residue in HPr, a phosphocarrier protein of the phosphoenolpyruvate-dependent sugar phosphotransferase system (PTS). HprK/P also catalyzes the pyrophosphate-producing, inorganic phosphate-dependent dephosphorylation (phosphorolysis) of seryl-phosphorylated HPr (P-Ser-HPr). The two antagonistic activities of HprK/P are regulated by several intracellular metabolites, which change their concentration in response to the absence or presence of rapidly metabolisable carbon sources (glucose, fructose, etc.) in the growth medium. Therefore, by controlling the phosphorylation state of HPr, HPrK/P is a sensor enzyme that plays a major role in the regulation of carbon metabolism and sugar transport: it mediates carbon catabolite repression (CCR), and regulates PTS-catalyzed carbohydrate uptake and inducer exclusion. The chain is HPr kinase/phosphorylase from Caldanaerobacter subterraneus subsp. tengcongensis (strain DSM 15242 / JCM 11007 / NBRC 100824 / MB4) (Thermoanaerobacter tengcongensis).